Reading from the N-terminus, the 290-residue chain is 4-hydroxybenzoate octaprenyltransferase (290 aa).

A run of 8 helical transmembrane segments spans residues 23–43 (IGTL…GKGV), 46–66 (LSIL…GCVV), 99–119 (LFVV…AMTI), 141–161 (LPQF…YAAV), 170–190 (WLLL…YAMV), 213–233 (LIVG…GYLT), 234–254 (QMSG…IHQQ), and 268–288 (AFMD…LSYW).

The protein belongs to the UbiA prenyltransferase family. Requires Mg(2+) as cofactor.

The protein localises to the cell inner membrane. The enzyme catalyses all-trans-octaprenyl diphosphate + 4-hydroxybenzoate = 4-hydroxy-3-(all-trans-octaprenyl)benzoate + diphosphate. Its pathway is cofactor biosynthesis; ubiquinone biosynthesis. In terms of biological role, catalyzes the prenylation of para-hydroxybenzoate (PHB) with an all-trans polyprenyl group. Mediates the second step in the final reaction sequence of ubiquinone-8 (UQ-8) biosynthesis, which is the condensation of the polyisoprenoid side chain with PHB, generating the first membrane-bound Q intermediate 3-octaprenyl-4-hydroxybenzoate. This Serratia proteamaculans (strain 568) protein is 4-hydroxybenzoate octaprenyltransferase.